Here is a 396-residue protein sequence, read N- to C-terminus: L-aspartate--glyoxylate aminotransferase (396 aa).

An N6-(pyridoxal phosphate)lysine modification is found at lysine 196.

Belongs to the class-V pyridoxal-phosphate-dependent aminotransferase family. Pyridoxal 5'-phosphate serves as cofactor.

It catalyses the reaction oxaloacetate + glycine = glyoxylate + L-aspartate. Its function is as follows. Catalyzes the transamination of glyoxylate into glycine using L-aspartate as the preferred amino group donor. Is essential for the growth of P.denitrificans in the presence of glycolate and glyoxylate since it functions in glyoxylate assimilation via the beta-hydroxyaspartate cycle (BHAC). Can catalyze the reverse reaction in vitro, and also use L-serine and L-glutamate as amino group donor, but with much less efficiency than L-aspartate. In Paracoccus denitrificans (strain Pd 1222), this protein is L-aspartate--glyoxylate aminotransferase.